A 765-amino-acid chain; its full sequence is Periplasmic beta-glucosidase (765 aa).

The first 20 residues, 1 to 20 (MKWLCSVGIAVSLALQPALA), serve as a signal peptide directing secretion. Residue aspartate 287 is part of the active site.

This sequence belongs to the glycosyl hydrolase 3 family.

The protein localises to the periplasm. It catalyses the reaction Hydrolysis of terminal, non-reducing beta-D-glucosyl residues with release of beta-D-glucose.. The protein is Periplasmic beta-glucosidase (bglX) of Escherichia coli (strain K12).